Here is a 514-residue protein sequence, read N- to C-terminus: Endogenous retrovirus group PABLB member 1 Env polyprotein (514 aa).

Residue Asn-58 is glycosylated (N-linked (GlcNAc...) asparagine). The interval 60–316 (STSNVFLQWA…YPYLPHVVNQ (257 aa)) is surface protein. Positions 82–85 (CWVC) match the CXXC motif. 6 N-linked (GlcNAc...) asparagine glycosylation sites follow: Asn-133, Asn-140, Asn-155, Asn-218, Asn-226, and Asn-267. Residues 317 to 514 (GTRAIVHRND…QRDIFHSNAP (198 aa)) are transmembrane protein. Residues 328–348 (LPTIFMPSVGLGTVIQHIEAL) form a fusion peptide region. Asn-350 and Asn-357 each carry an N-linked (GlcNAc...) asparagine glycan. The CKS-17 motif lies at 378–394 (LQNRMALDILTAAEGGT). A disulfide bridge connects residues Cys-395 and Cys-402. A CX6CC motif is present at residues 395–403 (CALIKTECC). Asn-408 and Asn-412 each carry an N-linked (GlcNAc...) asparagine glycan. Residues 452 to 472 (ILIVLATLWSVGIALCCGLYF) traverse the membrane as a helical segment.

This sequence belongs to the gamma type-C retroviral envelope protein family. HERV class-I R(b) env subfamily. The CXXC motif is highly conserved across a broad range of retroviral envelope proteins. It is thought to participate in the formation of a labile disulfide bond possibly with the CX6CC motif present in the transmembrane domain. In terms of tissue distribution, low expression in placenta and testis.

Its subcellular location is the cell membrane. Retroviral envelope proteins mediate receptor recognition and membrane fusion during early infection. Endogenous envelope proteins may have kept, lost or modified their original function during evolution. This endogenous envelope protein has lost its original fusogenic properties. This chain is Endogenous retrovirus group PABLB member 1 Env polyprotein (ERVPABLB-1), found in Homo sapiens (Human).